Here is a 34-residue protein sequence, read N- to C-terminus: Brevinin-2Ec (34 aa).

Residues Cys-28 and Cys-34 are joined by a disulfide bond.

It belongs to the frog skin active peptide (FSAP) family. Brevinin subfamily. In terms of tissue distribution, expressed by the skin glands.

The protein resides in the secreted. In terms of biological role, shows antibacterial activity against representative Gram-negative and Gram-positive bacterial species, and hemolytic activity. The polypeptide is Brevinin-2Ec (Pelophylax lessonae (Pool frog)).